The following is a 510-amino-acid chain: Fumarate hydratase, mitochondrial (510 aa).

The transit peptide at 1–44 directs the protein to the mitochondrion; the sequence is MYRALWLLARSRRLVRPPASALASAPGLSGAAVPSFWPPNAARM. Residues Lys61, Lys66, and Lys80 each carry the N6-acetyllysine; alternate modification. An N6-succinyllysine; alternate mark is found at Lys61, Lys66, and Lys80. A phosphothreonine mark is found at Thr85 and Thr90. Residue Lys94 is modified to N6-acetyllysine. An N6-acetyllysine; alternate mark is found at Lys115 and Lys122. 2 positions are modified to N6-succinyllysine; alternate: Lys115 and Lys122. Substrate-binding positions include 145 to 147, 176 to 179, and 186 to 188; these read SGT, HPND, and SSN. Lys213 is subject to N6-acetyllysine. Lys223 is subject to N6-acetyllysine; alternate. At Lys223 the chain carries N6-succinyllysine; alternate. Thr234 is a binding site for substrate. His235 (proton donor/acceptor) is an active-site residue. Thr236 carries the post-translational modification Phosphothreonine. Lys256 carries the post-translational modification N6-acetyllysine. At Lys292 the chain carries N6-acetyllysine; alternate. At Lys292 the chain carries N6-succinyllysine; alternate. The active site involves Ser365. Residues Ser366 and 371 to 373 contribute to the substrate site; that span reads KVN. Ser366 is subject to Phosphoserine. N6-succinyllysine is present on residues Lys467 and Lys473. Lys502 carries the post-translational modification N6-acetyllysine.

The protein belongs to the class-II fumarase/aspartase family. Fumarase subfamily. Homotetramer. Interacts with H2AZ1. Post-translationally, phosphorylation at Thr-236 by PRKDC in response to DNA damage promotes translocation to the nucleus and recruitment to DNA double-strand breaks (DSBs).

The protein resides in the mitochondrion. Its subcellular location is the cytoplasm. The protein localises to the cytosol. It localises to the nucleus. It is found in the chromosome. The catalysed reaction is (S)-malate = fumarate + H2O. It participates in carbohydrate metabolism; tricarboxylic acid cycle; (S)-malate from fumarate: step 1/1. In terms of biological role, catalyzes the reversible stereospecific interconversion of fumarate to L-malate. Experiments in other species have demonstrated that specific isoforms of this protein act in defined pathways and favor one direction over the other. Functionally, catalyzes the hydration of fumarate to L-malate in the tricarboxylic acid (TCA) cycle to facilitate a transition step in the production of energy in the form of NADH. Catalyzes the dehydration of L-malate to fumarate. Fumarate metabolism in the cytosol plays a role during urea cycle and arginine metabolism; fumarate being a by-product of the urea cycle and amino-acid catabolism. Also plays a role in DNA repair by promoting non-homologous end-joining (NHEJ). In response to DNA damage and phosphorylation by PRKDC, translocates to the nucleus and accumulates at DNA double-strand breaks (DSBs): acts by catalyzing formation of fumarate, an inhibitor of KDM2B histone demethylase activity, resulting in enhanced dimethylation of histone H3 'Lys-36' (H3K36me2). The chain is Fumarate hydratase, mitochondrial from Macaca fascicularis (Crab-eating macaque).